The primary structure comprises 173 residues: Thaumatin-like protein PWIR2 (173 aa).

A signal peptide spans 1–20 (MATSPVLFLLLAVFAAGASA).

Belongs to the thaumatin family.

The polypeptide is Thaumatin-like protein PWIR2 (Triticum aestivum (Wheat)).